Here is a 61-residue protein sequence, read N- to C-terminus: Probable tautomerase LMOf2365_2536 (61 aa).

The active-site Proton acceptor; via imino nitrogen is the Pro2.

This sequence belongs to the 4-oxalocrotonate tautomerase family.

The protein is Probable tautomerase LMOf2365_2536 of Listeria monocytogenes serotype 4b (strain F2365).